Consider the following 201-residue polypeptide: Small ribosomal subunit protein uS4c (201 aa).

A disordered region spans residues glycine 20–glutamine 43. Residues methionine 89 to asparagine 150 form the S4 RNA-binding domain.

This sequence belongs to the universal ribosomal protein uS4 family. As to quaternary structure, part of the 30S ribosomal subunit. Contacts protein S5. The interaction surface between S4 and S5 is involved in control of translational fidelity.

The protein resides in the plastid. Its subcellular location is the chloroplast. Functionally, one of the primary rRNA binding proteins, it binds directly to 16S rRNA where it nucleates assembly of the body of the 30S subunit. Its function is as follows. With S5 and S12 plays an important role in translational accuracy. The protein is Small ribosomal subunit protein uS4c (rps4) of Populus alba (White poplar).